Here is a 96-residue protein sequence, read N- to C-terminus: UPF0125 protein YfjF (96 aa).

It belongs to the UPF0125 (RnfH) family.

This Escherichia coli O157:H7 protein is UPF0125 protein YfjF (yfjF).